The sequence spans 1269 residues: Phospholipase D A (1269 aa).

Polar residues predominate over residues Tyr55–Thr64. A disordered region spans residues Tyr55–Ser121. Composition is skewed to low complexity over residues Asn65 to Ser87 and Asn95 to Asn114. Residues Ser131 to His192 are a coiled coil. The segment covering Asn222–Ala232 has biased composition (polar residues). Disordered stretches follow at residues Asn222–Thr269 and Asn300–Leu320. The span at Thr233–Thr269 shows a compositional bias: low complexity. PLD phosphodiesterase domains follow at residues Ile435 to Arg462 and Glu704 to Ser731. Residues His440, Lys442, Asp447, His709, Lys711, and Asp716 contribute to the active site. A coiled-coil region spans residues Asn803–Glu835. Composition is skewed to low complexity over residues Ile810–Ser850, Asn859–Asn906, and Ser934–Ser943. Disordered regions lie at residues Ile810–Pro966 and Ser983–Asp1007. A compositionally biased stretch (pro residues) spans Leu987–Leu1003. Residues Thr1059–Gln1096 adopt a coiled-coil conformation. Positions Ile1116–Ala1167 are disordered. Low complexity predominate over residues Ser1122 to Ser1142. The span at Asp1148–Ser1162 shows a compositional bias: polar residues.

The protein belongs to the phospholipase D family.

The catalysed reaction is a 1,2-diacyl-sn-glycero-3-phosphocholine + H2O = a 1,2-diacyl-sn-glycero-3-phosphate + choline + H(+). Inhibited by butan-1-ol. In terms of biological role, plays a role in cell growth. Hydrolyzes membrane phospholipids, such as PtdCho free headgroup and PtdOH (phosphatidic acid; signaling molecule on its own). Involved in the inhibition of actin-based motility and endocytosis. Its inhibition causes complete collapse of F-actin organization. The sequence is that of Phospholipase D A (pldA) from Dictyostelium discoideum (Social amoeba).